Reading from the N-terminus, the 320-residue chain is o-succinylbenzoate synthase (320 aa).

Lys-133 acts as the Proton donor in catalysis. Mg(2+) is bound by residues Asp-161, Glu-190, and Asp-213. Residue Lys-235 is the Proton acceptor of the active site.

Belongs to the mandelate racemase/muconate lactonizing enzyme family. MenC type 1 subfamily. It depends on a divalent metal cation as a cofactor.

It catalyses the reaction (1R,6R)-6-hydroxy-2-succinyl-cyclohexa-2,4-diene-1-carboxylate = 2-succinylbenzoate + H2O. It participates in quinol/quinone metabolism; 1,4-dihydroxy-2-naphthoate biosynthesis; 1,4-dihydroxy-2-naphthoate from chorismate: step 4/7. Its pathway is quinol/quinone metabolism; menaquinone biosynthesis. In terms of biological role, converts 2-succinyl-6-hydroxy-2,4-cyclohexadiene-1-carboxylate (SHCHC) to 2-succinylbenzoate (OSB). The chain is o-succinylbenzoate synthase from Shigella sonnei (strain Ss046).